The chain runs to 216 residues: uncharacterized protein (216 aa).

The chain crosses the membrane as a helical span at residues 7–29 (ILVIFFLIFFIGFEFSDMTLAFI).

It localises to the membrane. This is an uncharacterized protein from Archaeoglobus fulgidus (strain ATCC 49558 / DSM 4304 / JCM 9628 / NBRC 100126 / VC-16).